The following is a 302-amino-acid chain: GTPase Era (302 aa).

The 169-residue stretch at 10–178 (RCGYVAIVGR…EAQIAKHLPE (169 aa)) folds into the Era-type G domain. The G1 stretch occupies residues 18–25 (GRPNVGKS). Residue 18–25 (GRPNVGKS) participates in GTP binding. The interval 44–48 (QTTRH) is G2. The segment at 65-68 (DTPG) is G3. Residues 65-69 (DTPGM) and 127-130 (NKTD) contribute to the GTP site. The tract at residues 127–130 (NKTD) is G4. The tract at residues 157-159 (ISA) is G5. One can recognise a KH type-2 domain in the interval 201 to 285 (VREKIMRQLG…MLNLWVKVKG (85 aa)).

It belongs to the TRAFAC class TrmE-Era-EngA-EngB-Septin-like GTPase superfamily. Era GTPase family. In terms of assembly, monomer.

It is found in the cytoplasm. Its subcellular location is the cell inner membrane. Its function is as follows. An essential GTPase that binds both GDP and GTP, with rapid nucleotide exchange. Plays a role in 16S rRNA processing and 30S ribosomal subunit biogenesis and possibly also in cell cycle regulation and energy metabolism. The chain is GTPase Era from Pseudomonas putida (strain ATCC 47054 / DSM 6125 / CFBP 8728 / NCIMB 11950 / KT2440).